The chain runs to 163 residues: Nucleotide-binding protein AM1_1863 (163 aa).

This sequence belongs to the YajQ family.

Functionally, nucleotide-binding protein. This Acaryochloris marina (strain MBIC 11017) protein is Nucleotide-binding protein AM1_1863.